The primary structure comprises 200 residues: MAASAGPEIERLIGLLAKLPGLGPRSARRAALALLKRRDQLLAPLSDALAEAAARVKTCSTCGSLDTQDPCAICSDGTRDASLICVVEEVGALWAMERAGAFRGRYHVLGGLLSALDGVGPDALRVGPLVARASEPGVREVILALPATVDGQTTAHYLAERLAGAEVTVSMLARGVPVGGELDWLDDGTIAQAMRARRPA.

The C4-type zinc-finger motif lies at 59-74 (CSTCGSLDTQDPCAIC). A Toprim domain is found at 82 to 177 (SLICVVEEVG…TVSMLARGVP (96 aa)).

Belongs to the RecR family.

Its function is as follows. May play a role in DNA repair. It seems to be involved in an RecBC-independent recombinational process of DNA repair. It may act with RecF and RecO. The chain is Recombination protein RecR from Phenylobacterium zucineum (strain HLK1).